The following is a 78-amino-acid chain: Large ribosomal subunit protein bL28 (78 aa).

It belongs to the bacterial ribosomal protein bL28 family.

This chain is Large ribosomal subunit protein bL28, found in Tropheryma whipplei (strain TW08/27) (Whipple's bacillus).